Reading from the N-terminus, the 352-residue chain is tRNA uridine(34) hydroxylase (352 aa).

Residues 144–238 (SDPDVILIDT…YLEEVPASDS (95 aa)) enclose the Rhodanese domain. C198 (cysteine persulfide intermediate) is an active-site residue.

It belongs to the TrhO family.

The enzyme catalyses uridine(34) in tRNA + AH2 + O2 = 5-hydroxyuridine(34) in tRNA + A + H2O. Catalyzes oxygen-dependent 5-hydroxyuridine (ho5U) modification at position 34 in tRNAs. This Psychrobacter cryohalolentis (strain ATCC BAA-1226 / DSM 17306 / VKM B-2378 / K5) protein is tRNA uridine(34) hydroxylase.